A 165-amino-acid chain; its full sequence is Large ribosomal subunit protein uL10 (165 aa).

Belongs to the universal ribosomal protein uL10 family. In terms of assembly, part of the ribosomal stalk of the 50S ribosomal subunit. The N-terminus interacts with L11 and the large rRNA to form the base of the stalk. The C-terminus forms an elongated spine to which L12 dimers bind in a sequential fashion forming a multimeric L10(L12)X complex.

Its function is as follows. Forms part of the ribosomal stalk, playing a central role in the interaction of the ribosome with GTP-bound translation factors. In Borrelia turicatae (strain 91E135), this protein is Large ribosomal subunit protein uL10.